Here is a 521-residue protein sequence, read N- to C-terminus: MSSQSYYMNDLDDLRSLESSTLNKKDTAINELNPEQNDTRRSTDLLLEDKYGIQTGFSKYWKKCTYGIREYCKFIGPGFLIAVAYIDPGNYSTDLDAGSRFQYKLLFIVFLSNLFAVYLQSLCIRLGSVTGMDLARNCREHYNRYICWSFYVLAEIAIIATDIAEVIGTAVALKILMHIPLVAGVVITILDVLLVLIAWRPEGSMLSVRIFETAVALLVLVVAISFAVVLGRVHIGGAGTVFKGFLPSSTVFSREGLYSSIGILGATVMPHSLFLGSGLVQTRLRDLDVRRGNYTPVGDCSDYRPTHETIKHSLTYSIVEVALSLFTFALFTNSSILIVAGAVFYNTSGADTSDLFSIYDLLKEYVSISCGRLFAVALLFSGMSAGYVCTIAGQIVSEGYINWNLRPWLRRVITRAIAIIPCLVVSAAVGQSGLNQVLNASQVCLSILLPFLTFPLVMFTCSRKVMRVVSDSTNEETGQLIRETHDYSLGWTMTIVTWAIWLFLTALNLLLIVWLGMGVSF.

S42 carries the phosphoserine modification. Position 43 is a phosphothreonine (T43). The next 12 helical transmembrane spans lie at Y71 to Y91, K104 to I124, V152 to A172, I179 to W199, I210 to L230, V233 to S253, S260 to V280, L325 to Y345, L373 to G393, I417 to V437, A440 to T460, and I495 to L515.

It belongs to the NRAMP family.

It is found in the endoplasmic reticulum membrane. Transports manganese ions into the cell. Regulates cell morphogenesis through control of manganese homeostasis. In Schizosaccharomyces pombe (strain 972 / ATCC 24843) (Fission yeast), this protein is Manganese transporter pdt1 (pdt1).